Reading from the N-terminus, the 255-residue chain is Imidazole glycerol phosphate synthase subunit HisF (255 aa).

Catalysis depends on residues aspartate 12 and aspartate 131.

The protein belongs to the HisA/HisF family. In terms of assembly, heterodimer of HisH and HisF.

The protein localises to the cytoplasm. The enzyme catalyses 5-[(5-phospho-1-deoxy-D-ribulos-1-ylimino)methylamino]-1-(5-phospho-beta-D-ribosyl)imidazole-4-carboxamide + L-glutamine = D-erythro-1-(imidazol-4-yl)glycerol 3-phosphate + 5-amino-1-(5-phospho-beta-D-ribosyl)imidazole-4-carboxamide + L-glutamate + H(+). It functions in the pathway amino-acid biosynthesis; L-histidine biosynthesis; L-histidine from 5-phospho-alpha-D-ribose 1-diphosphate: step 5/9. Its function is as follows. IGPS catalyzes the conversion of PRFAR and glutamine to IGP, AICAR and glutamate. The HisF subunit catalyzes the cyclization activity that produces IGP and AICAR from PRFAR using the ammonia provided by the HisH subunit. This Neisseria meningitidis serogroup C / serotype 2a (strain ATCC 700532 / DSM 15464 / FAM18) protein is Imidazole glycerol phosphate synthase subunit HisF.